The chain runs to 525 residues: GMP synthase [glutamine-hydrolyzing] (525 aa).

In terms of domain architecture, Glutamine amidotransferase type-1 spans 9–207; the sequence is RILILDFGSQ…VVDICKCEKL (199 aa). Residue Cys-86 is the Nucleophile of the active site. Residues His-181 and Glu-183 contribute to the active site. The 193-residue stretch at 208–400 folds into the GMPS ATP-PPase domain; that stretch reads WTSASIIDDA…LGLPYDMLYR (193 aa). 235–241 contacts ATP; sequence SGGVDSS.

As to quaternary structure, homodimer.

It carries out the reaction XMP + L-glutamine + ATP + H2O = GMP + L-glutamate + AMP + diphosphate + 2 H(+). It participates in purine metabolism; GMP biosynthesis; GMP from XMP (L-Gln route): step 1/1. In terms of biological role, catalyzes the synthesis of GMP from XMP. This chain is GMP synthase [glutamine-hydrolyzing], found in Colwellia psychrerythraea (strain 34H / ATCC BAA-681) (Vibrio psychroerythus).